Reading from the N-terminus, the 782-residue chain is Protein bicaudal D (782 aa).

A coiled-coil region spans residues V15–A77. S103 bears the Phosphoserine mark. Residues E107 to A249 are a coiled coil. Phosphoserine occurs at positions 285, 288, and 305. A Phosphothreonine modification is found at T306. S310 is modified (phosphoserine). 2 coiled-coil regions span residues S320–R368 and T444–H477. At S528 the chain carries Phosphoserine. Coiled coils occupy residues E603 to Q630 and C695 to D743. The interval V699–L722 is interaction with Rab6. The segment at R744–F782 is disordered. Over residues R757–T767 the composition is skewed to polar residues. Low complexity predominate over residues R768–F782.

It belongs to the BicD family. In terms of assembly, may homodimerize but does not interact with BicDR. Interacts (via C-terminal domain) with Rab6. In terms of tissue distribution, in ovaries, expressed in oocyte and nurse cells.

It localises to the cytoplasm. The protein resides in the cytoskeleton. Its function is as follows. This protein is essential for differentiation. It may play a role in localizing of Nanos (a maternal determinant) activity in oocytes. Functions redundantly with BicDR. During oogenesis, plays a specific role, together with Rab6 but independently of Sec5, in the polarization of the oocyte microtubule cytoskeleton, in oskar mRNA localization and in the anterodorsal secretion of grk. Plays a role in the biogenesis of annulate lamellae containing nuclear pore complex components. During macrochaetae development, together with BicDR, involved in Rab 6 and Spn-F stability and distribution and actin cytoskeleton organization. The polypeptide is Protein bicaudal D (Drosophila melanogaster (Fruit fly)).